A 640-amino-acid chain; its full sequence is 1,4-alpha-glucan branching enzyme GlgB (640 aa).

Asp-318 functions as the Nucleophile in the catalytic mechanism. The Proton donor role is filled by Glu-371.

This sequence belongs to the glycosyl hydrolase 13 family. GlgB subfamily. Monomer.

It carries out the reaction Transfers a segment of a (1-&gt;4)-alpha-D-glucan chain to a primary hydroxy group in a similar glucan chain.. Its pathway is glycan biosynthesis; glycogen biosynthesis. Its function is as follows. Catalyzes the formation of the alpha-1,6-glucosidic linkages in glycogen by scission of a 1,4-alpha-linked oligosaccharide from growing alpha-1,4-glucan chains and the subsequent attachment of the oligosaccharide to the alpha-1,6 position. In Francisella tularensis subsp. holarctica (strain FTNF002-00 / FTA), this protein is 1,4-alpha-glucan branching enzyme GlgB.